The primary structure comprises 211 residues: tRNA (guanine-N(7)-)-methyltransferase (211 aa).

S-adenosyl-L-methionine contacts are provided by Glu44, Asp69, Asp96, and Asp118. Asp118 is an active-site residue. Lys122 contributes to the substrate binding site. The interaction with RNA stretch occupies residues 124–129 (RHEKRR). Substrate contacts are provided by residues Asp154 and 191-194 (TEYE).

Belongs to the class I-like SAM-binding methyltransferase superfamily. TrmB family.

It catalyses the reaction guanosine(46) in tRNA + S-adenosyl-L-methionine = N(7)-methylguanosine(46) in tRNA + S-adenosyl-L-homocysteine. It functions in the pathway tRNA modification; N(7)-methylguanine-tRNA biosynthesis. Catalyzes the formation of N(7)-methylguanine at position 46 (m7G46) in tRNA. This is tRNA (guanine-N(7)-)-methyltransferase from Streptococcus pneumoniae (strain Taiwan19F-14).